The sequence spans 199 residues: Single-stranded DNA cytosine deaminase (199 aa).

Residues 1–30 carry the Bipartite nuclear localization signal motif; that stretch reads MDSLLKKQRQFLYQFKNVRWAKGRHETYLC. Residues 2-26 form an interaction with SUPT6H region; the sequence is DSLLKKQRQFLYQFKNVRWAKGRHE. One can recognise a CMP/dCMP-type deaminase domain in the interval 23-130; sequence GRHETYLCYV…KAEPEGLRRL (108 aa). At T27 the chain carries Phosphothreonine; by PKA. S38 bears the Phosphoserine; by PKA mark. An important for interaction with CTNNBL1 region spans residues 39-42; the sequence is PTSF. A Zn(2+)-binding site is contributed by H56. E58 serves as the catalytic Proton donor. 2 residues coordinate Zn(2+): C87 and C90. The required for interaction with RNF126 stretch occupies residues 88-116; sequence YDCARHVADFLRGYPNLSLRIFTARLYFC. The Nuclear export signal signature appears at 184–199; it reads LYEVDDLRDAFRTLGL.

This sequence belongs to the cytidine and deoxycytidylate deaminase family. As to quaternary structure, interacts with CTNNBL1; the interaction is important for the immunoglobulin switch activity of AICDA. Interacts (via its NLS) with KPNA1. Interacts with PKA/PRKACA and PRKAR1A/PKR1. Interacts with SUPT6H, TRIM28 and NCL. Directly interacts with MCM3AP; this interaction may favor AICDA recruitment to immunoglobulin variable region genes, hence promoting somatic hypermutations. Zn(2+) is required as a cofactor. Post-translationally, ser-38 is the major site whereas Thr-27 is the minor site of phosphorylation. Phosphorylation regulates its class-switch recombination activity. Probably monoubiquitinated on several residues by RNF126. In terms of tissue distribution, expressed in lymph nodes, spleen and thymus.

It is found in the nucleus. The protein resides in the cytoplasm. It carries out the reaction a 2'-deoxycytidine in single-stranded DNA + H2O + H(+) = a 2'-deoxyuridine in single-stranded DNA + NH4(+). Functionally, single-stranded DNA-specific cytidine deaminase. Involved in somatic hypermutation (SHM), gene conversion, and class-switch recombination (CSR) in B-lymphocytes by deaminating C to U during transcription of Ig-variable (V) and Ig-switch (S) region DNA. Required for several crucial steps of B-cell terminal differentiation necessary for efficient antibody responses. May also play a role in the epigenetic regulation of gene expression by participating in DNA demethylation. This is Single-stranded DNA cytosine deaminase (AICDA) from Bos taurus (Bovine).